The following is a 309-amino-acid chain: Probable manganese-dependent inorganic pyrophosphatase (309 aa).

Residues His-9, Asp-13, Asp-15, Asp-75, His-97, and Asp-149 each contribute to the Mn(2+) site.

This sequence belongs to the PPase class C family. Requires Mn(2+) as cofactor.

It is found in the cytoplasm. The enzyme catalyses diphosphate + H2O = 2 phosphate + H(+). The chain is Probable manganese-dependent inorganic pyrophosphatase from Staphylococcus aureus (strain COL).